The chain runs to 401 residues: Aspartokinase (401 aa).

Belongs to the aspartokinase family.

The catalysed reaction is L-aspartate + ATP = 4-phospho-L-aspartate + ADP. The protein operates within amino-acid biosynthesis; L-lysine biosynthesis via DAP pathway; (S)-tetrahydrodipicolinate from L-aspartate: step 1/4. It participates in amino-acid biosynthesis; L-methionine biosynthesis via de novo pathway; L-homoserine from L-aspartate: step 1/3. Its pathway is amino-acid biosynthesis; L-threonine biosynthesis; L-threonine from L-aspartate: step 1/5. This is Aspartokinase (lysC) from Rickettsia felis (strain ATCC VR-1525 / URRWXCal2) (Rickettsia azadi).